Here is a 300-residue protein sequence, read N- to C-terminus: Probable lipid kinase YegS-like (300 aa).

The region spanning 1 to 129 is the DAGKc domain; sequence MSKKALLILH…CDVIRVNNHY (129 aa). Residues Thr-38, 64 to 70, and Thr-92 contribute to the ATP site; that span reads GDGSVRD. 3 residues coordinate Mg(2+): Leu-210, Asp-213, and Leu-215. The Proton acceptor role is filled by Glu-272.

This sequence belongs to the diacylglycerol/lipid kinase family. YegS lipid kinase subfamily. Requires Mg(2+) as cofactor. It depends on Ca(2+) as a cofactor.

The protein localises to the cytoplasm. Its function is as follows. Probably phosphorylates lipids; the in vivo substrate is unknown. The sequence is that of Probable lipid kinase YegS-like from Alcanivorax borkumensis (strain ATCC 700651 / DSM 11573 / NCIMB 13689 / SK2).